The following is a 301-amino-acid chain: Methionyl-tRNA formyltransferase (301 aa).

Ser109–Pro112 contributes to the (6S)-5,6,7,8-tetrahydrofolate binding site.

Belongs to the Fmt family.

It catalyses the reaction L-methionyl-tRNA(fMet) + (6R)-10-formyltetrahydrofolate = N-formyl-L-methionyl-tRNA(fMet) + (6S)-5,6,7,8-tetrahydrofolate + H(+). Attaches a formyl group to the free amino group of methionyl-tRNA(fMet). The formyl group appears to play a dual role in the initiator identity of N-formylmethionyl-tRNA by promoting its recognition by IF2 and preventing the misappropriation of this tRNA by the elongation apparatus. The polypeptide is Methionyl-tRNA formyltransferase (Jannaschia sp. (strain CCS1)).